We begin with the raw amino-acid sequence, 169 residues long: Major fimbrial subunit SMF-1 (169 aa).

Positions 1–11 (MLAAAPLAANA) are cleaved as a signal peptide.

Belongs to the fimbrial protein family.

The protein localises to the fimbrium. Functionally, involved in adherence to eukaryotic epithelial cells and abiotic surfaces. Mediates agglutination of animal red blood cells. This chain is Major fimbrial subunit SMF-1, found in Stenotrophomonas maltophilia (strain K279a).